A 208-amino-acid chain; its full sequence is Uracil phosphoribosyltransferase (208 aa).

5-phospho-alpha-D-ribose 1-diphosphate is bound by residues Arg78, Arg103, and 130 to 138 (DPMLATGHS). Uracil-binding positions include Ile193 and 198–200 (GDA). A 5-phospho-alpha-D-ribose 1-diphosphate-binding site is contributed by Asp199.

It belongs to the UPRTase family. Requires Mg(2+) as cofactor.

The enzyme catalyses UMP + diphosphate = 5-phospho-alpha-D-ribose 1-diphosphate + uracil. It functions in the pathway pyrimidine metabolism; UMP biosynthesis via salvage pathway; UMP from uracil: step 1/1. With respect to regulation, allosterically activated by GTP. Its function is as follows. Catalyzes the conversion of uracil and 5-phospho-alpha-D-ribose 1-diphosphate (PRPP) to UMP and diphosphate. In Brucella anthropi (strain ATCC 49188 / DSM 6882 / CCUG 24695 / JCM 21032 / LMG 3331 / NBRC 15819 / NCTC 12168 / Alc 37) (Ochrobactrum anthropi), this protein is Uracil phosphoribosyltransferase.